The primary structure comprises 154 residues: Crossover junction endodeoxyribonuclease RuvC (154 aa).

Catalysis depends on residues D7, E67, and D139. Mg(2+) is bound by residues D7, E67, and D139.

It belongs to the RuvC family. Homodimer which binds Holliday junction (HJ) DNA. The HJ becomes 2-fold symmetrical on binding to RuvC with unstacked arms; it has a different conformation from HJ DNA in complex with RuvA. In the full resolvosome a probable DNA-RuvA(4)-RuvB(12)-RuvC(2) complex forms which resolves the HJ. Requires Mg(2+) as cofactor.

It is found in the cytoplasm. It catalyses the reaction Endonucleolytic cleavage at a junction such as a reciprocal single-stranded crossover between two homologous DNA duplexes (Holliday junction).. The RuvA-RuvB-RuvC complex processes Holliday junction (HJ) DNA during genetic recombination and DNA repair. Endonuclease that resolves HJ intermediates. Cleaves cruciform DNA by making single-stranded nicks across the HJ at symmetrical positions within the homologous arms, yielding a 5'-phosphate and a 3'-hydroxyl group; requires a central core of homology in the junction. The consensus cleavage sequence is 5'-(A/T)TT(C/G)-3'. Cleavage occurs on the 3'-side of the TT dinucleotide at the point of strand exchange. HJ branch migration catalyzed by RuvA-RuvB allows RuvC to scan DNA until it finds its consensus sequence, where it cleaves and resolves the cruciform DNA. This chain is Crossover junction endodeoxyribonuclease RuvC, found in Prochlorococcus marinus (strain MIT 9303).